The chain runs to 136 residues: Large ribosomal subunit protein uL16 (136 aa).

The protein belongs to the universal ribosomal protein uL16 family. Part of the 50S ribosomal subunit.

In terms of biological role, binds 23S rRNA and is also seen to make contacts with the A and possibly P site tRNAs. The chain is Large ribosomal subunit protein uL16 from Proteus mirabilis (strain HI4320).